A 278-amino-acid chain; its full sequence is Putative carbamate hydrolase RutD (278 aa).

It belongs to the AB hydrolase superfamily. Hydrolase RutD family.

It catalyses the reaction carbamate + 2 H(+) = NH4(+) + CO2. Functionally, involved in pyrimidine catabolism. May facilitate the hydrolysis of carbamate, a reaction that can also occur spontaneously. The polypeptide is Putative carbamate hydrolase RutD (Yersinia enterocolitica serotype O:8 / biotype 1B (strain NCTC 13174 / 8081)).